We begin with the raw amino-acid sequence, 324 residues long: MSLLDKKISTWFMRQAGRYLPEYLKISKEMTFFQMCESPEIASEITLQPIKRFDLDAAIVFSDILVLPRALGCNIDIKKSTGPVIERINNPNWLTYDAFEEKISPTLNTIAITRKSLPQNKSLIGFAGGPWTVALYIIEGGWDKTFLRTKEFINKRYHEFKEIISILTDATIQYLNKQLKHGADFIQIFESFAWAASSNEFKEFIVEPTRRIVSSIDVPVIGFPKGAGVSYLQYVKETSVDVISTDHSLPLDWIADNLQTHAVVQGNLDPYLLAFNKKEALLQTERIVDAFSEKNFIFNLGHGIYKETPLSSVEAVLDFIRARN.

Substrate is bound by residues 14–18 (RQAGR), phenylalanine 32, aspartate 63, tyrosine 136, serine 191, and histidine 302.

Belongs to the uroporphyrinogen decarboxylase family. Homodimer.

Its subcellular location is the cytoplasm. It catalyses the reaction uroporphyrinogen III + 4 H(+) = coproporphyrinogen III + 4 CO2. It participates in porphyrin-containing compound metabolism; protoporphyrin-IX biosynthesis; coproporphyrinogen-III from 5-aminolevulinate: step 4/4. In terms of biological role, catalyzes the decarboxylation of four acetate groups of uroporphyrinogen-III to yield coproporphyrinogen-III. This is Uroporphyrinogen decarboxylase from Neorickettsia sennetsu (strain ATCC VR-367 / Miyayama) (Ehrlichia sennetsu).